A 321-amino-acid polypeptide reads, in one-letter code: Methionyl-tRNA formyltransferase (321 aa).

S113–P116 lines the (6S)-5,6,7,8-tetrahydrofolate pocket.

It belongs to the Fmt family.

The enzyme catalyses L-methionyl-tRNA(fMet) + (6R)-10-formyltetrahydrofolate = N-formyl-L-methionyl-tRNA(fMet) + (6S)-5,6,7,8-tetrahydrofolate + H(+). In terms of biological role, attaches a formyl group to the free amino group of methionyl-tRNA(fMet). The formyl group appears to play a dual role in the initiator identity of N-formylmethionyl-tRNA by promoting its recognition by IF2 and preventing the misappropriation of this tRNA by the elongation apparatus. The polypeptide is Methionyl-tRNA formyltransferase (Pseudoalteromonas translucida (strain TAC 125)).